The chain runs to 234 residues: Orofacial cleft 1 candidate gene 1 protein homolog (234 aa).

Disordered regions lie at residues 1–21 and 201–234; these read MEKE…KSKS and SKHH…WQQR. A compositionally biased stretch (basic residues) spans 202-213; that stretch reads KHHKEASHHNKK. Basic and acidic residues predominate over residues 223 to 234; that stretch reads FKDREASRWQQR.

In Gallus gallus (Chicken), this protein is Orofacial cleft 1 candidate gene 1 protein homolog (OFCC1).